We begin with the raw amino-acid sequence, 358 residues long: tRNA-specific 2-thiouridylase MnmA (358 aa).

Residues 6-13 and Leu32 contribute to the ATP site; that span reads AMSGGVDS. Cys101 (nucleophile) is an active-site residue. An intrachain disulfide couples Cys101 to Cys193. Gly125 is a binding site for ATP. An interaction with tRNA region spans residues 143–145; sequence KDQ. Cys193 serves as the catalytic Cysteine persulfide intermediate.

The protein belongs to the MnmA/TRMU family.

The protein resides in the cytoplasm. The enzyme catalyses S-sulfanyl-L-cysteinyl-[protein] + uridine(34) in tRNA + AH2 + ATP = 2-thiouridine(34) in tRNA + L-cysteinyl-[protein] + A + AMP + diphosphate + H(+). Catalyzes the 2-thiolation of uridine at the wobble position (U34) of tRNA, leading to the formation of s(2)U34. The sequence is that of tRNA-specific 2-thiouridylase MnmA from Mycobacterium avium (strain 104).